The chain runs to 224 residues: MFPKINTIDPYISLRLFEVKPKYVGYSSVDARNQSFAIHDIKDYEKFSNAGLFYTSPTEITCYCCGMKFCNWLYEKHPLQVHGFWSRNCGFMRATLGIIGLKKMIDSYNDYYNNEVFVKHKNRVYTHKKLEDMGFSKPFMQFILANAFIPPYRKYIHKIILNDRYFTFKFAAHLLSFHKVNLDNQTTYCMTCGIEPIKKDENFCNACKTLNYKHYKTLNFSVKL.

The BIR repeat unit spans residues 29 to 92 (VDARNQSFAI…GFWSRNCGFM (64 aa)). Residues Cys62, Cys65, His82, and Cys89 each coordinate Zn(2+).

Functionally, not essential for growth or virulence. Does not have antiapoptotic function. In Ornithodoros (relapsing fever ticks), this protein is IAP-like protein p27 (p27).